Consider the following 419-residue polypeptide: UDP-N-acetylglucosamine 1-carboxyvinyltransferase 2 (419 aa).

24–25 lines the phosphoenolpyruvate pocket; that stretch reads KN. A UDP-N-acetyl-alpha-D-glucosamine-binding site is contributed by Arg-94. The Proton donor role is filled by Cys-118. At Cys-118 the chain carries 2-(S-cysteinyl)pyruvic acid O-phosphothioketal. Residues 123 to 127, Asp-307, and Ile-329 contribute to the UDP-N-acetyl-alpha-D-glucosamine site; that span reads RPIDQ.

This sequence belongs to the EPSP synthase family. MurA subfamily.

Its subcellular location is the cytoplasm. The enzyme catalyses phosphoenolpyruvate + UDP-N-acetyl-alpha-D-glucosamine = UDP-N-acetyl-3-O-(1-carboxyvinyl)-alpha-D-glucosamine + phosphate. The protein operates within cell wall biogenesis; peptidoglycan biosynthesis. Functionally, cell wall formation. Adds enolpyruvyl to UDP-N-acetylglucosamine. This chain is UDP-N-acetylglucosamine 1-carboxyvinyltransferase 2, found in Staphylococcus aureus (strain MSSA476).